A 41-amino-acid chain; its full sequence is MKVRSSLKSLKSRHRDCKIVRRKGRVYVINKTDPRFKAKQG.

It belongs to the bacterial ribosomal protein bL36 family.

The chain is Large ribosomal subunit protein bL36 from Hyphomonas neptunium (strain ATCC 15444).